A 260-amino-acid chain; its full sequence is Ribonuclease PH (260 aa).

Phosphate is bound by residues Arg-88 and 126–128 (GTR).

It belongs to the RNase PH family. Homohexameric ring arranged as a trimer of dimers.

It catalyses the reaction tRNA(n+1) + phosphate = tRNA(n) + a ribonucleoside 5'-diphosphate. Its function is as follows. Phosphorolytic 3'-5' exoribonuclease that plays an important role in tRNA 3'-end maturation. Removes nucleotide residues following the 3'-CCA terminus of tRNAs; can also add nucleotides to the ends of RNA molecules by using nucleoside diphosphates as substrates, but this may not be physiologically important. Probably plays a role in initiation of 16S rRNA degradation (leading to ribosome degradation) during starvation. In Mycobacterium sp. (strain JLS), this protein is Ribonuclease PH.